The following is a 301-amino-acid chain: Uricase-2 isozyme 2 (301 aa).

Active-site charge relay system residues include K17 and T63. Residues T63, D64, F165, R182, V237, Q238, and N257 each contribute to the urate site. The active-site Charge relay system is H259. The Microbody targeting signal signature appears at 299-301; that stretch reads SKL.

The protein belongs to the uricase family.

The protein resides in the peroxisome. It catalyses the reaction urate + O2 + H2O = 5-hydroxyisourate + H2O2. It functions in the pathway purine metabolism; urate degradation; (S)-allantoin from urate: step 1/3. In terms of biological role, catalyzes the oxidation of uric acid to 5-hydroxyisourate, which is further processed to form (S)-allantoin. This Canavalia lineata (Beach bean) protein is Uricase-2 isozyme 2.